The primary structure comprises 262 residues: WW domain-binding protein 2 (262 aa).

The region spanning 1 to 84 is the GRAM domain; it reads MALNKNHSEG…YLMKDCEVKQ (84 aa). Position 192 is a phosphotyrosine (Y192). Residues 196-200 carry the PPxY motif 1 motif; it reads PPPPY. Over residues 197–206 the composition is skewed to pro residues; that stretch reads PPPYPGPMEP. The disordered stretch occupies residues 197 to 262; that stretch reads PPPYPGPMEP…YYPPEDKKTQ (66 aa). The span at 219–231 shows a compositional bias: low complexity; that stretch reads AAEAKAAEAAASA. Y232 is subject to Phosphotyrosine. Positions 246–255 are enriched in pro residues; it reads SQPPPPPYYP. The PPxY motif 2 signature appears at 249–253; that stretch reads PPPPY.

In terms of assembly, binds to the WW domain of YAP1, WWP1 and WWP2. Interacts with NEDD4. Interacts with ESR1 and UBE3A. Post-translationally, phosphorylated in repsonse to EGF as well as estrogen and progesterone hormones. Tyr-192 and Tyr-232 are phosphorylated by YES and SRC inducing nuclear translocation.

The protein localises to the cytoplasm. It is found in the nucleus. Acts as a transcriptional coactivator of estrogen and progesterone receptors (ESR1 and PGR) upon hormone activation. In presence of estrogen, binds to ESR1-responsive promoters. Synergizes with YAP1 to enhance PGR activity. Modulates expression of post-synaptic scaffolding proteins via regulation of ESR1, ESR2 and PGR. This Rattus norvegicus (Rat) protein is WW domain-binding protein 2 (Wbp2).